The sequence spans 471 residues: Light-independent protochlorophyllide reductase subunit N (471 aa).

Positions 22, 47, and 107 each coordinate [4Fe-4S] cluster.

It belongs to the BchN/ChlN family. In terms of assembly, protochlorophyllide reductase is composed of three subunits; ChlL, ChlN and ChlB. Forms a heterotetramer of two ChlB and two ChlN subunits. [4Fe-4S] cluster serves as cofactor.

It localises to the plastid. Its subcellular location is the chloroplast. It carries out the reaction chlorophyllide a + oxidized 2[4Fe-4S]-[ferredoxin] + 2 ADP + 2 phosphate = protochlorophyllide a + reduced 2[4Fe-4S]-[ferredoxin] + 2 ATP + 2 H2O. It participates in porphyrin-containing compound metabolism; chlorophyll biosynthesis (light-independent). In terms of biological role, component of the dark-operative protochlorophyllide reductase (DPOR) that uses Mg-ATP and reduced ferredoxin to reduce ring D of protochlorophyllide (Pchlide) to form chlorophyllide a (Chlide). This reaction is light-independent. The NB-protein (ChlN-ChlB) is the catalytic component of the complex. The protein is Light-independent protochlorophyllide reductase subunit N of Huperzia lucidula (Shining clubmoss).